Reading from the N-terminus, the 451-residue chain is Metalloprotease MJ0996 (451 aa).

This sequence belongs to the peptidase U62 family.

In terms of biological role, probable metalloprotease. The protein is Metalloprotease MJ0996 of Methanocaldococcus jannaschii (strain ATCC 43067 / DSM 2661 / JAL-1 / JCM 10045 / NBRC 100440) (Methanococcus jannaschii).